The primary structure comprises 953 residues: Translation initiation factor IF-2 (953 aa).

A disordered region spans residues 55-340; the sequence is GVTTEAPAAS…KSKRQKRNEY (286 aa). The span at 81 to 93 shows a compositional bias: low complexity; that stretch reads KPAATPQQAAKPA. Residues 110–119 show a composition bias toward pro residues; the sequence is PKPAAKPVPK. Low complexity-rich tracts occupy residues 123–133 and 143–160; these read SAAKAESSAPK and KPAA…MPRP. Residues 202 to 219 are compositionally biased toward gly residues; it reads PGGGPRPGGNRPQGGQGG. The segment covering 233–248 has biased composition (low complexity); it reads QPRPQGGSRSQQSGGQ. The span at 280-323 shows a compositional bias: gly residues; that stretch reads NGRGGAGGQGGRPGFGGGRPGGGGSAGGRGGRRGGTAGAFGRPG. The segment covering 327–336 has biased composition (basic residues); that stretch reads RKGRKSKRQK. The tr-type G domain occupies 449–621; sequence KRPPVVTVMG…VLLTADASLD (173 aa). A G1 region spans residues 458 to 465; it reads GHVDHGKT. Residue 458 to 465 participates in GTP binding; it reads GHVDHGKT. Positions 483 to 487 are G2; that stretch reads GITQG. Residues 508–511 are G3; that stretch reads DTPG. GTP is bound by residues 508–512 and 562–565; these read DTPGH and NKID. Positions 562–565 are G4; it reads NKID. The segment at 598–600 is G5; it reads SAK.

Belongs to the TRAFAC class translation factor GTPase superfamily. Classic translation factor GTPase family. IF-2 subfamily.

The protein localises to the cytoplasm. One of the essential components for the initiation of protein synthesis. Protects formylmethionyl-tRNA from spontaneous hydrolysis and promotes its binding to the 30S ribosomal subunits. Also involved in the hydrolysis of GTP during the formation of the 70S ribosomal complex. The protein is Translation initiation factor IF-2 of Corynebacterium diphtheriae (strain ATCC 700971 / NCTC 13129 / Biotype gravis).